The sequence spans 404 residues: Argininosuccinate synthase (404 aa).

Residues 10–18 (AYSGGVDTS) and alanine 38 contribute to the ATP site. Tyrosine 89 serves as a coordination point for L-citrulline. Residue glycine 119 participates in ATP binding. L-aspartate contacts are provided by threonine 121, asparagine 125, and aspartate 126. An L-citrulline-binding site is contributed by asparagine 125. Residues arginine 129, serine 177, serine 186, glutamate 262, and tyrosine 274 each contribute to the L-citrulline site.

The protein belongs to the argininosuccinate synthase family. Type 1 subfamily. As to quaternary structure, homotetramer.

The protein resides in the cytoplasm. It carries out the reaction L-citrulline + L-aspartate + ATP = 2-(N(omega)-L-arginino)succinate + AMP + diphosphate + H(+). The protein operates within amino-acid biosynthesis; L-arginine biosynthesis; L-arginine from L-ornithine and carbamoyl phosphate: step 2/3. This chain is Argininosuccinate synthase, found in Prochlorococcus marinus (strain MIT 9515).